Here is a 229-residue protein sequence, read N- to C-terminus: Heptaprenylglyceryl phosphate synthase (229 aa).

K12 provides a ligand contact to sn-glycerol 1-phosphate. 2 residues coordinate Mg(2+): D14 and S40. Sn-glycerol 1-phosphate contacts are provided by residues 159-164 (YLEYSG), G189, and 209-210 (GN).

The protein belongs to the GGGP/HepGP synthase family. Group I subfamily. In terms of assembly, homodimer. Mg(2+) is required as a cofactor.

The enzyme catalyses sn-glycerol 1-phosphate + all-trans-heptaprenyl diphosphate = 3-heptaprenyl-sn-glycero-1-phosphate + diphosphate. The protein operates within membrane lipid metabolism; glycerophospholipid metabolism. In terms of biological role, prenyltransferase that catalyzes in vivo the transfer of the heptaprenyl moiety of heptaprenyl pyrophosphate (HepPP; 35 carbon atoms) to the C3 hydroxyl of sn-glycerol-1-phosphate (G1P), producing heptaprenylglyceryl phosphate (HepGP). This reaction is an ether-bond-formation step in the biosynthesis of archaea-type G1P-based membrane lipids found in Bacillales. This Bacillus mycoides (strain KBAB4) (Bacillus weihenstephanensis) protein is Heptaprenylglyceryl phosphate synthase.